The following is a 494-amino-acid chain: NADPH:adrenodoxin oxidoreductase, mitochondrial (494 aa).

The N-terminal 34 residues, 1-34, are a transit peptide targeting the mitochondrion; the sequence is MAPRCWRWWSWSAWPGVRPLPSRSTPTPGFCKKF. Ala51, Glu72, Leu80, and Val116 together coordinate FAD. NADP(+) is bound by residues 187 to 190, 231 to 232, and Glu243; these read QGNV and RR. Ser313 carries the phosphoserine modification. Residues Trp401 and 408–410 each bind FAD; that span reads GVI. Gly408 is a binding site for NADP(+).

It belongs to the ferredoxin--NADP reductase type 1 family. As to quaternary structure, monomer. Interacts directly with FDX1. It depends on FAD as a cofactor.

It is found in the mitochondrion inner membrane. The enzyme catalyses 2 reduced [adrenodoxin] + NADP(+) + H(+) = 2 oxidized [adrenodoxin] + NADPH. It carries out the reaction 2 reduced [2Fe-2S]-[ferredoxin] + NADP(+) + H(+) = 2 oxidized [2Fe-2S]-[ferredoxin] + NADPH. The protein operates within steroid metabolism; cholesterol metabolism. Its function is as follows. Serves as the first electron transfer protein in all the mitochondrial P450 systems including cholesterol side chain cleavage in all steroidogenic tissues, steroid 11-beta hydroxylation in the adrenal cortex, 25-OH-vitamin D3-24 hydroxylation in the kidney, and sterol C-27 hydroxylation in the liver. Also acts as a ferredoxin--NADP(+) reductase essential for coenzyme Q biosynthesis: together with FDX2, transfers the electrons required for the hydroxylation reaction performed by COQ6. This is NADPH:adrenodoxin oxidoreductase, mitochondrial (Fdxr) from Rattus norvegicus (Rat).